A 325-amino-acid chain; its full sequence is Large ribosomal subunit protein uL1m (325 aa).

The N-terminal 50 residues, 1-50, are a transit peptide targeting the mitochondrion; it reads MAATVRCFGRVLIHHQRCSLATVTSQTSLYPCCIYVPVPNRHFAAAAKPA. Positions 47–66 are disordered; it reads AKPAKKTKKGTKEKASNEKK. The segment covering 56 to 66 has biased composition (basic and acidic residues); the sequence is GTKEKASNEKK.

This sequence belongs to the universal ribosomal protein uL1 family.

The protein resides in the mitochondrion. The protein is Large ribosomal subunit protein uL1m (MRPL1) of Bos taurus (Bovine).